The chain runs to 252 residues: uncharacterized protein (252 aa).

10 consecutive repeat copies span residues 68-82, 83-97, 98-112, 113-127, 128-142, 143-157, 158-172, 173-187, 188-202, and 203-217. The segment at 68-246 is 13 X 15 AA tandem repeats; sequence TYNQSQNVCP…LIDTYNQSQN (179 aa). One copy of the 11; truncated repeat lies at 218-230; sequence TYNQSQNVCPQDL. One copy of the 12; truncated repeat lies at 231-239; it reads NVYTQDLID. The 13; truncated repeat unit spans residues 240 to 246; sequence TYNQSQN.

Functionally, a protein probably derived from this gene is found in cuboidal crystalline inclusions, but is not toxic even when coexpressed with upstream ORF1. The protein runs anomalously as a 50 kDa band in gels. This is an uncharacterized protein from Bacillus thuringiensis subsp. kurstaki.